A 251-amino-acid chain; its full sequence is Triosephosphate isomerase (251 aa).

9-11 (NWK) is a binding site for substrate. Histidine 95 acts as the Electrophile in catalysis. Residue glutamate 167 is the Proton acceptor of the active site. Substrate contacts are provided by residues glycine 173, serine 212, and 233 to 234 (GG).

This sequence belongs to the triosephosphate isomerase family. In terms of assembly, homodimer.

The protein localises to the cytoplasm. The enzyme catalyses D-glyceraldehyde 3-phosphate = dihydroxyacetone phosphate. Its pathway is carbohydrate biosynthesis; gluconeogenesis. It functions in the pathway carbohydrate degradation; glycolysis; D-glyceraldehyde 3-phosphate from glycerone phosphate: step 1/1. Functionally, involved in the gluconeogenesis. Catalyzes stereospecifically the conversion of dihydroxyacetone phosphate (DHAP) to D-glyceraldehyde-3-phosphate (G3P). This chain is Triosephosphate isomerase, found in Pseudomonas putida (strain W619).